A 124-amino-acid chain; its full sequence is Small ribosomal subunit protein uS13 (124 aa).

The interval 95-124 (GLPVRGQRTKTNARTRKGPKRTIAGKKKAR) is disordered.

The protein belongs to the universal ribosomal protein uS13 family. In terms of assembly, part of the 30S ribosomal subunit. Forms a loose heterodimer with protein S19. Forms two bridges to the 50S subunit in the 70S ribosome.

Located at the top of the head of the 30S subunit, it contacts several helices of the 16S rRNA. In the 70S ribosome it contacts the 23S rRNA (bridge B1a) and protein L5 of the 50S subunit (bridge B1b), connecting the 2 subunits; these bridges are implicated in subunit movement. Contacts the tRNAs in the A and P-sites. The chain is Small ribosomal subunit protein uS13 from Mycobacterium sp. (strain JLS).